A 778-amino-acid chain; its full sequence is Probable dipeptidyl peptidase 4 (778 aa).

The first 18 residues, 1–18, serve as a signal peptide directing secretion; it reads MKTSQFLSLLLLAGIAQA. N-linked (GlcNAc...) asparagine glycosylation is found at Asn-84, Asn-114, and Asn-222. Catalysis depends on charge relay system residues Ser-616, Asp-693, and His-728.

Belongs to the peptidase S9B family.

Its subcellular location is the secreted. The enzyme catalyses Release of an N-terminal dipeptide, Xaa-Yaa-|-Zaa-, from a polypeptide, preferentially when Yaa is Pro, provided Zaa is neither Pro nor hydroxyproline.. In terms of biological role, extracellular dipeptidyl-peptidase which removes N-terminal dipeptides sequentially from polypeptides having unsubstituted N-termini provided that the penultimate residue is proline. Contributes to pathogenicity. This Arthroderma benhamiae (strain ATCC MYA-4681 / CBS 112371) (Trichophyton mentagrophytes) protein is Probable dipeptidyl peptidase 4 (DPP4).